Here is a 332-residue protein sequence, read N- to C-terminus: Phosphate acyltransferase (332 aa).

Belongs to the PlsX family. In terms of assembly, homodimer. Probably interacts with PlsY.

It localises to the cytoplasm. The enzyme catalyses a fatty acyl-[ACP] + phosphate = an acyl phosphate + holo-[ACP]. It functions in the pathway lipid metabolism; phospholipid metabolism. In terms of biological role, catalyzes the reversible formation of acyl-phosphate (acyl-PO(4)) from acyl-[acyl-carrier-protein] (acyl-ACP). This enzyme utilizes acyl-ACP as fatty acyl donor, but not acyl-CoA. The sequence is that of Phosphate acyltransferase from Streptococcus mutans serotype c (strain ATCC 700610 / UA159).